The chain runs to 350 residues: Anthranilate phosphoribosyltransferase (350 aa).

5-phospho-alpha-D-ribose 1-diphosphate-binding positions include Gly-93, 96-97, Thr-101, 103-106, 121-129, and Ser-133; these read GD, NIST, and KHGNRSASG. Gly-93 provides a ligand contact to anthranilate. Mg(2+) is bound at residue Ser-105. Asn-124 serves as a coordination point for anthranilate. Residue Arg-179 participates in anthranilate binding. Residues Asp-238 and Glu-239 each coordinate Mg(2+).

It belongs to the anthranilate phosphoribosyltransferase family. Homodimer. Mg(2+) is required as a cofactor.

It catalyses the reaction N-(5-phospho-beta-D-ribosyl)anthranilate + diphosphate = 5-phospho-alpha-D-ribose 1-diphosphate + anthranilate. It participates in amino-acid biosynthesis; L-tryptophan biosynthesis; L-tryptophan from chorismate: step 2/5. In terms of biological role, catalyzes the transfer of the phosphoribosyl group of 5-phosphorylribose-1-pyrophosphate (PRPP) to anthranilate to yield N-(5'-phosphoribosyl)-anthranilate (PRA). This is Anthranilate phosphoribosyltransferase from Parasynechococcus marenigrum (strain WH8102).